The chain runs to 990 residues: Type III restriction-modification enzyme StyLTI Res subunit (990 aa).

The helicase-like domain stretch occupies residues 50–545 (NIDVKMETGT…GLRLPVDENG (496 aa)). Residues 884–970 (LLKYDYPQQV…RQNINVEFAE (87 aa)) form the VRR-NUC domain. Positions 913–937 (STTPDFVYRIERQDADSVYLLVETK) are endonuclease domain.

This sequence belongs to the type III restriction-modification system Res protein family. As to quaternary structure, contains two different subunits: Res and Mod. Mg(2+) is required as a cofactor. The cofactor is S-adenosyl-L-methionine.

The catalysed reaction is Endonucleolytic cleavage of DNA to give specific double-stranded fragments with terminal 5'-phosphates.. In terms of biological role, a type III restriction enzyme that recognizes 2 inversely oriented double-stranded sequences 5'-CAGAG-3' and cleaves DNA 25-27 base pairs downstream. After binding to one recognition site undergoes random one-dimensional diffusion along DNA until it collides with a stationary enzyme bound to the second DNA site, which is when DNA cleavage occurs. DNA restriction requires both the Res and Mod subunits. In Salmonella typhimurium (strain LT2 / SGSC1412 / ATCC 700720), this protein is Type III restriction-modification enzyme StyLTI Res subunit.